The following is an 84-amino-acid chain: Small, acid-soluble spore protein gamma-type (84 aa).

2 stretches are compositionally biased toward polar residues: residues 1 to 25 and 34 to 44; these read MANS…SAAG and ASETNAQQVRK. A disordered region spans residues 1-84; the sequence is MANSNNFSKT…SAEQNKQQNS (84 aa). 2 consecutive repeats follow at residues 21–47 and 48–74; these read QSAA…KQNQ and QSAG…QQNQ. Low complexity-rich tracts occupy residues 45 to 57 and 71 to 84; these read QNQQ…GQFG and QQNQ…QQNS.

This sequence belongs to the gamma-type SASP family.

Functionally, SASP are proteins degraded in the first minutes of spore germination and provide amino acids for both new protein synthesis and metabolism. These proteins may be involved in dormant spore's high resistance to UV light. The sequence is that of Small, acid-soluble spore protein gamma-type (sspE) from Bacillus subtilis (strain 168).